A 543-amino-acid chain; its full sequence is Probable protein kinase UbiB (543 aa).

A Protein kinase domain is found at Asp123–Leu501. Residues Leu129–Val137 and Lys152 each bind ATP. Asp287 acts as the Proton acceptor in catalysis. Residues Thr517–Trp539 form a helical membrane-spanning segment.

It belongs to the ABC1 family. UbiB subfamily.

It localises to the cell inner membrane. It participates in cofactor biosynthesis; ubiquinone biosynthesis [regulation]. Its function is as follows. Is probably a protein kinase regulator of UbiI activity which is involved in aerobic coenzyme Q (ubiquinone) biosynthesis. In Aliivibrio salmonicida (strain LFI1238) (Vibrio salmonicida (strain LFI1238)), this protein is Probable protein kinase UbiB.